A 90-amino-acid chain; its full sequence is Leech factor Xa inhibitor (90 aa).

It is found in the secreted. Its function is as follows. Potent anticoagulant inhibiting the amidolytic activity of factor Xa (F10) (Ki=4nM) and reducing its ability to activate prothrombin (F2) in the prothrombinase complex (EC(50)=40nM). The sequence is that of Leech factor Xa inhibitor from Haementeria depressa (Leech).